The following is a 253-amino-acid chain: Imidazole glycerol phosphate synthase subunit HisF (253 aa).

Active-site residues include aspartate 11 and aspartate 130.

This sequence belongs to the HisA/HisF family. As to quaternary structure, heterodimer of HisH and HisF.

The protein resides in the cytoplasm. The enzyme catalyses 5-[(5-phospho-1-deoxy-D-ribulos-1-ylimino)methylamino]-1-(5-phospho-beta-D-ribosyl)imidazole-4-carboxamide + L-glutamine = D-erythro-1-(imidazol-4-yl)glycerol 3-phosphate + 5-amino-1-(5-phospho-beta-D-ribosyl)imidazole-4-carboxamide + L-glutamate + H(+). Its pathway is amino-acid biosynthesis; L-histidine biosynthesis; L-histidine from 5-phospho-alpha-D-ribose 1-diphosphate: step 5/9. IGPS catalyzes the conversion of PRFAR and glutamine to IGP, AICAR and glutamate. The HisF subunit catalyzes the cyclization activity that produces IGP and AICAR from PRFAR using the ammonia provided by the HisH subunit. The polypeptide is Imidazole glycerol phosphate synthase subunit HisF (Desulfitobacterium hafniense (strain DSM 10664 / DCB-2)).